A 28-amino-acid chain; its full sequence is Kalata-B12 (28 aa).

The segment at residues 1-28 is a cross-link (cyclopeptide (Gly-Asp)); sequence GSLCGDTCFVLGCNDSSCSCNYPICVKD. Disulfide bonds link C4/C18, C8/C20, and C13/C25.

In terms of processing, this is a cyclic peptide.

Functionally, probably participates in a plant defense mechanism. In Oldenlandia affinis, this protein is Kalata-B12.